The chain runs to 295 residues: Aspartate carbamoyltransferase catalytic subunit (295 aa).

Carbamoyl phosphate-binding residues include Arg54 and Thr55. Lys82 contacts L-aspartate. Carbamoyl phosphate contacts are provided by Arg104, His132, and Gln135. 2 residues coordinate L-aspartate: Arg165 and Arg218. Gly257 and Pro258 together coordinate carbamoyl phosphate.

It belongs to the aspartate/ornithine carbamoyltransferase superfamily. ATCase family. In terms of assembly, heterododecamer (2C3:3R2) of six catalytic PyrB chains organized as two trimers (C3), and six regulatory PyrI chains organized as three dimers (R2).

It carries out the reaction carbamoyl phosphate + L-aspartate = N-carbamoyl-L-aspartate + phosphate + H(+). Its pathway is pyrimidine metabolism; UMP biosynthesis via de novo pathway; (S)-dihydroorotate from bicarbonate: step 2/3. Functionally, catalyzes the condensation of carbamoyl phosphate and aspartate to form carbamoyl aspartate and inorganic phosphate, the committed step in the de novo pyrimidine nucleotide biosynthesis pathway. The chain is Aspartate carbamoyltransferase catalytic subunit from Wolbachia pipientis subsp. Culex pipiens (strain wPip).